Reading from the N-terminus, the 90-residue chain is Small ribosomal subunit protein bS20 (90 aa).

The segment covering 1 to 11 has biased composition (basic residues); the sequence is MAHHKSAKKRI. The disordered stretch occupies residues 1–22; it reads MAHHKSAKKRIRQTERRTEVNR. Positions 12 to 22 are enriched in basic and acidic residues; sequence RQTERRTEVNR.

Belongs to the bacterial ribosomal protein bS20 family.

Functionally, binds directly to 16S ribosomal RNA. This Paramagnetospirillum magneticum (strain ATCC 700264 / AMB-1) (Magnetospirillum magneticum) protein is Small ribosomal subunit protein bS20.